A 366-amino-acid chain; its full sequence is Sec-independent protein translocase protein TatC (366 aa).

7 helical membrane passes run 42 to 62 (VLAV…LFTM), 70 to 90 (HMPA…FIPL), 97 to 117 (AVFI…APGL), 134 to 154 (ILFY…VFGF), 179 to 199 (LFFA…LVIV), 207 to 227 (LAGF…ILTP), and 230 to 250 (VLSQ…GLFV). Acidic residues predominate over residues 266-279 (EAEESGAADDESDE). The disordered stretch occupies residues 266 to 366 (EAEESGAADD…PSPKKPDSPV (101 aa)). Composition is skewed to basic and acidic residues over residues 281 to 290 (VSARHAEYEA) and 301 to 318 (DMDK…RLES). Positions 319-333 (DSSASDDGPESNTAG) are enriched in polar residues.

It belongs to the TatC family. As to quaternary structure, the Tat system comprises two distinct complexes: a TatABC complex, containing multiple copies of TatA, TatB and TatC subunits, and a separate TatA complex, containing only TatA subunits. Substrates initially bind to the TatABC complex, which probably triggers association of the separate TatA complex to form the active translocon.

Its subcellular location is the cell inner membrane. Its function is as follows. Part of the twin-arginine translocation (Tat) system that transports large folded proteins containing a characteristic twin-arginine motif in their signal peptide across membranes. Together with TatB, TatC is part of a receptor directly interacting with Tat signal peptides. This Halothiobacillus neapolitanus (strain ATCC 23641 / c2) (Thiobacillus neapolitanus) protein is Sec-independent protein translocase protein TatC.